Here is a 580-residue protein sequence, read N- to C-terminus: Negative elongation factor B (580 aa).

The residue at position 519 (K519) is an N6-acetyllysine. The segment at 548-580 (LEQLDHRKPSPAQAAETPALELPLPSVPAPAPL) is disordered. The residue at position 557 (S557) is a Phosphoserine.

The protein belongs to the NELF-B family. In terms of assembly, the NELF complex is composed of NELFA, NELFB, NELFCD (isoform NELF-C or isoform NELF-D) and NELFE; the N-terminus of NELFB binds to the NELFA:NELFCD subcomplex. Binds RNA which may help to stabilize the NELF complex on nucleic acid. Interacts with the first BRCT repeat of BRCA1. Interacts with KIAA1191. Interacts with NELFE. As to expression, widely expressed. Expressed in heart, brain, lung, placenta, liver, skeletal muscle, kidney and pancreas.

Its subcellular location is the nucleus. Functionally, essential component of the NELF complex, a complex that negatively regulates the elongation of transcription by RNA polymerase II. The NELF complex, which acts via an association with the DSIF complex and causes transcriptional pausing, is counteracted by the P-TEFb kinase complex. May be able to induce chromatin unfolding. Essential for early embryogenesis; plays an important role in maintaining the undifferentiated state of embryonic stem cells (ESCs) by preventing unscheduled expression of developmental genes. Plays a key role in establishing the responsiveness of stem cells to developmental cues; facilitates plasticity and cell fate commitment in ESCs by establishing the appropriate expression level of signaling molecules. Supports the transcription of genes involved in energy metabolism in cardiomyocytes; facilitates the association of transcription initiation factors with the promoters of the metabolism-related genes. In terms of biological role, (Microbial infection) The NELF complex is involved in HIV-1 latency possibly involving recruitment of PCF11 to paused RNA polymerase II. In vitro, binds weakly to the HIV-1 TAR RNA which is located in the long terminal repeat (LTR) of HIV-1. The chain is Negative elongation factor B (NELFB) from Homo sapiens (Human).